Reading from the N-terminus, the 424-residue chain is Chloroquine resistance transporter (424 aa).

Residues 1 to 58 (MKFASKKNNQKNSSKNDERYRELDNLVQEGNGSRLGGGSCLGKCAHVFKLIFKEIKDN) are Cytoplasmic-facing. A helical membrane pass occupies residues 59–79 (IFIYILSIIYLSVCVMNKIFA). Topologically, residues 80–90 (KRTLNKIGNYS) are vacuolar. An N-linked (GlcNAc...) asparagine glycan is attached at asparagine 88. The chain crosses the membrane as a helical span at residues 91–111 (FVTSETHNFICMIMFFIVYSL). Topologically, residues 112-127 (FGNKKGNSKERHRSFN) are cytoplasmic. Residues 128-148 (LQFFAISMLDACSVILAFIGL) traverse the membrane as a helical segment. The Vacuolar portion of the chain corresponds to 149-154 (TRTTGN). A helical transmembrane segment spans residues 155-175 (IQSFVLQLSIPINMFFCFLIL). Topologically, residues 176 to 178 (RYR) are cytoplasmic. Residues 179-199 (YHLYNYLGAVIIVVTIALVEM) form a helical membrane-spanning segment. Residues 200–209 (KLSFETQEEN) lie on the Vacuolar side of the membrane. Residues 210 to 230 (SIIFNLVLISALIPVCFSNMT) traverse the membrane as a helical segment. The Cytoplasmic portion of the chain corresponds to 231–248 (REIVFKKYKIDILRLNAM). Residues 249–269 (VSFFQLFTSCLILPVYTLPFL) traverse the membrane as a helical segment. At 270–317 (KQLHLPYNEIWTNIKNGFACLFLGRNTVVENCGLGMAKLCDDCDGAWK) the chain is on the vacuolar side. 2 disulfides stabilise this stretch: cysteine 289-cysteine 312 and cysteine 301-cysteine 309. A helical transmembrane segment spans residues 318-338 (TFALFSFFNICDNLITSYIID). Topologically, residues 339–346 (KFSTMTYT) are cytoplasmic. Residues 347–367 (IVSCIQGPAIAIAYYFKFLAG) traverse the membrane as a helical segment. The Vacuolar segment spans residues 368–377 (DVVREPRLLD). A helical membrane pass occupies residues 378 to 398 (FVTLFGYLFGSIIYRVGNIIL). Topologically, residues 399–424 (ERKKMRNEENEDSEGELTNVDSIITQ) are cytoplasmic.

This sequence belongs to the CRT-like transporter family. Monomer.

The protein localises to the vacuole membrane. The catalysed reaction is L-arginine(in) = L-arginine(out). The enzyme catalyses L-lysine(in) = L-lysine(out). It carries out the reaction L-histidine(out) = L-histidine(in). It catalyses the reaction histamine(out) = histamine(in). The catalysed reaction is spermidine(in) = spermidine(out). The enzyme catalyses Fe(3+)(in) = Fe(3+)(out). It carries out the reaction Fe(2+)(in) = Fe(2+)(out). With respect to regulation, transporter activity is trans-stimulated by host-derived peptides containing 4-11 amino acids. Trans-stimulation by hemoglobin-derived peptide VDPVNF is pH-dependent and sodium-independent. Saquinavir trans-stimulates transport of hemoglobin-derived peptide VDPVNF. Protons are non-competitive inhibitors of chloroquine transport. In terms of biological role, nutrient transporter. Substrate transport is pH-dependent. Can transport arginine, lysine, histidine, peptides, histamine and spermidine. May modulate activity of endogenous transporters. Involved in maintaining the osmotic homeostasis of the digestive vacuole. Required for the asexual intraerythrocytic proliferation of parasites. Can transport Fe(2+) and Fe(3+). The polypeptide is Chloroquine resistance transporter (Plasmodium falciparum).